The following is a 32-amino-acid chain: Natriuretic peptide Coa_NP1 (32 aa).

Residues C8 and C24 are joined by a disulfide bond.

It belongs to the natriuretic peptide family. Snake NP subfamily. In terms of tissue distribution, expressed by the venom gland.

It localises to the secreted. Snake venom natriuretic peptide that exhibits hypotensive and vasodepressor activity in rats. The chain is Natriuretic peptide Coa_NP1 from Crotalus lutosus abyssus (Grand Canyon rattlesnake).